Here is a 236-residue protein sequence, read N- to C-terminus: Sugar fermentation stimulation protein homolog (236 aa).

This sequence belongs to the SfsA family.

This chain is Sugar fermentation stimulation protein homolog, found in Synechococcus elongatus (strain ATCC 33912 / PCC 7942 / FACHB-805) (Anacystis nidulans R2).